Reading from the N-terminus, the 106-residue chain is Small ribosomal subunit protein bS20 (106 aa).

Basic residues predominate over residues 1-32 (MAQKKPKRNLSALKRHRQSLKRRLRNKAKKSA). Positions 1–33 (MAQKKPKRNLSALKRHRQSLKRRLRNKAKKSAI) are disordered.

This sequence belongs to the bacterial ribosomal protein bS20 family.

Its function is as follows. Binds directly to 16S ribosomal RNA. In Thermus thermophilus (strain ATCC BAA-163 / DSM 7039 / HB27), this protein is Small ribosomal subunit protein bS20 (rpsT).